The primary structure comprises 305 residues: Ornithine carbamoyltransferase (305 aa).

Carbamoyl phosphate is bound by residues S50–T53, Q77, R101, and H128–Q131. L-ornithine is bound by residues N159, D222, and S226–M227. Carbamoyl phosphate is bound by residues C262–L263 and R290.

It belongs to the aspartate/ornithine carbamoyltransferase superfamily. OTCase family.

The protein localises to the cytoplasm. It catalyses the reaction carbamoyl phosphate + L-ornithine = L-citrulline + phosphate + H(+). Its pathway is amino-acid biosynthesis; L-arginine biosynthesis; L-arginine from L-ornithine and carbamoyl phosphate: step 1/3. Reversibly catalyzes the transfer of the carbamoyl group from carbamoyl phosphate (CP) to the N(epsilon) atom of ornithine (ORN) to produce L-citrulline. In Synechococcus elongatus (strain ATCC 33912 / PCC 7942 / FACHB-805) (Anacystis nidulans R2), this protein is Ornithine carbamoyltransferase.